A 527-amino-acid polypeptide reads, in one-letter code: RUS family member 1 (527 aa).

N21 is a glycosylation site (N-linked (GlcNAc...) asparagine). Residues 220-240 traverse the membrane as a helical segment; it reads SQETAVNLVGMLLSVIVSSFI. The N-linked (GlcNAc...) asparagine glycan is linked to N243. A helical transmembrane segment spans residues 245–265; it reads SLIVTWLVFLFFTSLHLFCNY. N346 is a glycosylation site (N-linked (GlcNAc...) asparagine). Residues 350–426 are disordered; the sequence is TKNVNNNNNN…NNNNNNNNNK (77 aa). Residues N467 and N497 are each glycosylated (N-linked (GlcNAc...) asparagine).

The protein belongs to the RUS1 family.

It is found in the membrane. This chain is RUS family member 1 (rusf1), found in Dictyostelium discoideum (Social amoeba).